The primary structure comprises 569 residues: Urease subunit alpha (569 aa).

Residues 131 to 569 enclose the Urease domain; that stretch reads GGFDSHIHFI…LPMAQRYFLF (439 aa). Ni(2+)-binding residues include H136, H138, and K219. N6-carboxylysine is present on K219. H221 is a substrate binding site. Ni(2+) is bound by residues H248 and H274. Catalysis depends on H322, which acts as the Proton donor. D362 contacts Ni(2+).

The protein belongs to the metallo-dependent hydrolases superfamily. Urease alpha subunit family. In terms of assembly, heterotrimer of UreA (gamma), UreB (beta) and UreC (alpha) subunits. Three heterotrimers associate to form the active enzyme. Ni cation serves as cofactor. Post-translationally, carboxylation allows a single lysine to coordinate two nickel ions.

It localises to the cytoplasm. It carries out the reaction urea + 2 H2O + H(+) = hydrogencarbonate + 2 NH4(+). It participates in nitrogen metabolism; urea degradation; CO(2) and NH(3) from urea (urease route): step 1/1. The protein is Urease subunit alpha of Roseobacter denitrificans (strain ATCC 33942 / OCh 114) (Erythrobacter sp. (strain OCh 114)).